Reading from the N-terminus, the 567-residue chain is Arginine--tRNA ligase (567 aa).

A 'HIGH' region motif is present at residues 121-131 (ANPNGPLHVGH).

Belongs to the class-I aminoacyl-tRNA synthetase family.

The protein localises to the cytoplasm. The catalysed reaction is tRNA(Arg) + L-arginine + ATP = L-arginyl-tRNA(Arg) + AMP + diphosphate. This chain is Arginine--tRNA ligase, found in Methanococcoides burtonii (strain DSM 6242 / NBRC 107633 / OCM 468 / ACE-M).